The sequence spans 302 residues: Chloramphenicol resistance protein (302 aa).

Its subcellular location is the cell membrane. Its function is as follows. This protein is thought to be a membrane-associated barrier of drug uptake. This is Chloramphenicol resistance protein (cml) from Escherichia coli.